The sequence spans 377 residues: Presenilin-associated rhomboid-like protein, mitochondrial (377 aa).

The transit peptide at 1–50 (MALYSWVQRGWRCGQTWAPLLGGGYRELSATQARQLLGRRFNLLLQQKCG) directs the protein to the mitochondrion. Residues 51–95 (FRKAPRKVEPRRSDTGSSGEAYKRSALIPPLEETVFYPSPYPVRT) lie on the Mitochondrial matrix side of the membrane. Ser-63 and Ser-68 each carry phosphoserine. A helical transmembrane segment spans residues 96–116 (LLKPFFFTVGFTGCAFGSAAI). Over 117–165 (WQYESLKSRVQSYFDGIKADWLDSIRPQKEGNLRKEINKWWNSLSDGQR) the chain is Mitochondrial intermembrane. A helical transmembrane segment spans residues 166-186 (TVTGIIAANALVFCLWRVPSL). Residues 187-214 (HRTMIRYFTSNPASKVLCSPMLLSTFSH) are Mitochondrial matrix-facing. Residues 215 to 235 (FSLFHMAANMYVLWSFSTSIV) traverse the membrane as a helical segment. Topologically, residues 236–242 (NILGQEQ) are mitochondrial intermembrane. A helical transmembrane segment spans residues 243 to 263 (FVAVYLSAGVISNFVSYVCKV). The Mitochondrial matrix segment spans residues 264 to 268 (ATGRY). The helical transmembrane segment at 269–289 (GPSLGASGAIMTVLAAVCTKI) threads the bilayer. Ser-275 serves as the catalytic Nucleophile. Topologically, residues 290 to 293 (PEGR) are mitochondrial intermembrane. A helical membrane pass occupies residues 294-314 (LAIIFLPVFTFTAGNALKAII). Topologically, residues 315 to 331 (AMDTAGMILGWKFFDHA) are mitochondrial matrix. Residues 332–352 (AHLGGALFGIWYITYGHELIW) traverse the membrane as a helical segment. His-333 is a catalytic residue. The Mitochondrial intermembrane segment spans residues 353–377 (KNREPLVKIWHEIRTNGPKKGGGSK).

It belongs to the peptidase S54 family. As to quaternary structure, interacts with PSEN1 and PSEN2. Binds OPA1. P-beta is proteolytically processed (beta-cleavage) in a PARL-dependent manner.

The protein localises to the mitochondrion inner membrane. It localises to the nucleus. It carries out the reaction Cleaves type-1 transmembrane domains using a catalytic dyad composed of serine and histidine that are contributed by different transmembrane domains.. In terms of biological role, required for the control of apoptosis during postnatal growth. Essential for proteolytic processing of an antiapoptotic form of OPA1 which prevents the release of mitochondrial cytochrome c in response to intrinsic apoptotic signals. Required for the maturation of PINK1 into its 52kDa mature form after its cleavage by mitochondrial-processing peptidase (MPP). Promotes cleavage of serine/threonine-protein phosphatase PGAM5 in damaged mitochondria in response to loss of mitochondrial membrane potential. Mediates differential cleavage of PINK1 and PGAM5 depending on the health status of mitochondria, disassociating from PINK1 and associating with PGAM5 in response to mitochondrial membrane potential loss. Required for processing of CLPB into a form with higher protein disaggregase activity by removing an autoinhibitory N-terminal peptide. Promotes processing of DIABLO/SMAC in the mitochondrion which is required for DIABLO apoptotic activity. Also required for cleavage of STARD7 and TTC19. Promotes changes in mitochondria morphology regulated by phosphorylation of P-beta domain. The polypeptide is Presenilin-associated rhomboid-like protein, mitochondrial (Rattus norvegicus (Rat)).